A 214-amino-acid polypeptide reads, in one-letter code: CASP-like protein 3A1 (214 aa).

The Cytoplasmic segment spans residues 1-49 (MTNGQKIEVAVQLPESKVAATENNETMSGPLVVGGGVAKPFGRKADVMH). Residues 50–70 (VILRLLCTITSVTAVSFMVTA) form a helical membrane-spanning segment. Residues 71–96 (HQSSTVSIYGFMLPVRSKWSFSHSFE) lie on the Extracellular side of the membrane. The chain crosses the membrane as a helical span at residues 97–117 (YLVGVSAAVAAHSLLQLLISM). At 118-132 (SRLLRKSPVIPSRSH) the chain is on the cytoplasmic side. The chain crosses the membrane as a helical span at residues 133–153 (AWLIFAGDQVFAYAMISAGAA). The Extracellular segment spans residues 154 to 182 (ASGVTNLNRTGIQHTALPNFCKPLNYFCN). N-linked (GlcNAc...) asparagine glycosylation occurs at N161. Residues 183–203 (HVAVSIAFAFISCLLLAALAV) traverse the membrane as a helical segment. The Cytoplasmic segment spans residues 204 to 214 (QEVIWLSKSKY).

This sequence belongs to the Casparian strip membrane proteins (CASP) family. As to quaternary structure, homodimer and heterodimers.

Its subcellular location is the cell membrane. The polypeptide is CASP-like protein 3A1 (Ricinus communis (Castor bean)).